A 105-amino-acid chain; its full sequence is Small ribosomal subunit protein uS10 (105 aa).

It belongs to the universal ribosomal protein uS10 family. In terms of assembly, part of the 30S ribosomal subunit.

Involved in the binding of tRNA to the ribosomes. The sequence is that of Small ribosomal subunit protein uS10 from Picosynechococcus sp. (strain ATCC 27264 / PCC 7002 / PR-6) (Agmenellum quadruplicatum).